The chain runs to 160 residues: Transcriptional repressor NrdR (160 aa).

Residues 3 to 34 fold into a zinc finger; the sequence is CPYCQYEDTQVKDSRPVEEGAVIRRRRVCPVC. An ATP-cone domain is found at 49–139; the sequence is LLVSKKSGRC…VYRDFRNASD (91 aa).

This sequence belongs to the NrdR family. Zn(2+) serves as cofactor.

Its function is as follows. Negatively regulates transcription of bacterial ribonucleotide reductase nrd genes and operons by binding to NrdR-boxes. The polypeptide is Transcriptional repressor NrdR (Bartonella quintana (strain Toulouse) (Rochalimaea quintana)).